A 445-amino-acid chain; its full sequence is Tubulin beta-2 chain (445 aa).

Positions 11, 69, 138, 142, 143, 144, 204, and 226 each coordinate GTP. A Mg(2+)-binding site is contributed by glutamate 69. The disordered stretch occupies residues 424–445 (QYQDATAEDEGEFDEDEEVEEA). The span at 429–445 (TAEDEGEFDEDEEVEEA) shows a compositional bias: acidic residues.

Belongs to the tubulin family. Dimer of alpha and beta chains. A typical microtubule is a hollow water-filled tube with an outer diameter of 25 nm and an inner diameter of 15 nM. Alpha-beta heterodimers associate head-to-tail to form protofilaments running lengthwise along the microtubule wall with the beta-tubulin subunit facing the microtubule plus end conferring a structural polarity. Microtubules usually have 13 protofilaments but different protofilament numbers can be found in some organisms and specialized cells. Mg(2+) is required as a cofactor.

Its subcellular location is the cytoplasm. It localises to the cytoskeleton. In terms of biological role, tubulin is the major constituent of microtubules, a cylinder consisting of laterally associated linear protofilaments composed of alpha- and beta-tubulin heterodimers. Microtubules grow by the addition of GTP-tubulin dimers to the microtubule end, where a stabilizing cap forms. Below the cap, tubulin dimers are in GDP-bound state, owing to GTPase activity of alpha-tubulin. This Echinococcus multilocularis (Fox tapeworm) protein is Tubulin beta-2 chain (TUB-2).